Consider the following 873-residue polypeptide: Cyanophycin synthetase (873 aa).

In terms of domain architecture, ATP-grasp spans 224-480; sequence KTILQDAGIP…VAAPVLDMLF (257 aa). 495–501 provides a ligand contact to ATP; it reads GTNGKTT.

The protein in the C-terminal section; belongs to the MurCDEF family. As to quaternary structure, homodimer.

The enzyme catalyses [L-4-(L-arginin-2-N-yl)aspartate](n) + L-aspartate + ATP = [L-4-(L-arginin-2-N-yl)aspartate](n)-L-aspartate + ADP + phosphate + H(+). It catalyses the reaction [L-4-(L-arginin-2-N-yl)aspartate](n)-L-aspartate + L-arginine + ATP = [L-4-(L-arginin-2-N-yl)aspartate](n+1) + ADP + phosphate + H(+). Catalyzes the ATP-dependent polymerization of arginine and aspartate to multi-L-arginyl-poly-L-aspartic acid (cyanophycin; a water-insoluble reserve polymer). The protein is Cyanophycin synthetase (cphA) of Synechocystis sp. (strain ATCC 27184 / PCC 6803 / Kazusa).